A 344-amino-acid polypeptide reads, in one-letter code: Serine/arginine-rich splicing factor 6 (344 aa).

Positions 1–72 (MPRVYIGRLS…ERVIVEHARG (72 aa)) constitute an RRM 1 domain. Phosphoserine occurs at positions 45, 81, and 84. Residues 75-103 (RDRDGYSYGSRSGGGGYSSRRTSGRDKYG) are disordered. Positions 110–183 (YRLIVENLSS…RNIRLIEDKP (74 aa)) constitute an RRM 2 domain. Position 165 is an N6-acetyllysine (Lys165). Residues 176–344 (IRLIEDKPRT…RSRSRSSSRD (169 aa)) are disordered. Lys182 is covalently cross-linked (Glycyl lysine isopeptide (Lys-Gly) (interchain with G-Cter in SUMO2)). Over residues 185–250 (TSHRRSYSGS…RKSRSKSKSK (66 aa)) the composition is skewed to basic residues. Composition is skewed to basic and acidic residues over residues 264 to 273 (RSKDEYEKSR) and 280 to 291 (SPKENGKGDIKS). 2 positions are modified to phosphoserine: Ser297 and Ser299. Residue Ser303 is modified to Phosphoserine; by DYRK1A. Residues Ser314 and Ser316 each carry the phosphoserine modification. Over residues 322–344 (ATSRSRSRSRSKSRSRSRSSSRD) the composition is skewed to basic residues.

It belongs to the splicing factor SR family. In terms of assembly, binds SREK1/SFRS12. Interacts with DYRK1A. Extensively phosphorylated on serine residues in the RS domain. Phosphorylated by DYRK1A, probably in the RS domain. Phosphorylation by DYRK1A modulates alternative splice site selection and inhibits the expression of MAPT/Tau exon 10.

The protein localises to the nucleus. It localises to the nucleus speckle. Functionally, plays a role in constitutive splicing and modulates the selection of alternative splice sites. Plays a role in the alternative splicing of MAPT/Tau exon 10. Binds to alternative exons of TNC pre-mRNA and promotes the expression of alternatively spliced TNC. Plays a role in wound healing and in the regulation of keratinocyte differentiation and proliferation via its role in alternative splicing. The chain is Serine/arginine-rich splicing factor 6 (SRSF6) from Homo sapiens (Human).